Consider the following 107-residue polypeptide: Ribosome-associated factor Y (107 aa).

The disordered stretch occupies residues 85–107 (LNKLQHKSESRRADERLKDSFEN).

As to quaternary structure, associates mainly with 70S ribosomes.

In terms of biological role, during stationary phase, prevents 70S dimer formation, probably in order to regulate translation efficiency during transition between the exponential and the stationary phases. In addition, during environmental stress such as cold shock or excessive cell density at stationary phase, stabilizes the 70S ribosome against dissociation, inhibits translation initiation and increase translation accuracy. When normal growth conditions are restored, is quickly released from the ribosome. The polypeptide is Ribosome-associated factor Y (Haemophilus influenzae (strain ATCC 51907 / DSM 11121 / KW20 / Rd)).